Reading from the N-terminus, the 496-residue chain is Glycylpeptide N-tetradecanoyltransferase 1 (496 aa).

Positions 1 to 81 (MADESETAVK…DSTQDQPVKM (81 aa)) are disordered. A phosphoserine mark is found at S31 and S47. Over residues 55–66 (KKKKKKQKKKKE) the composition is skewed to basic residues. A Phosphoserine modification is found at S83. Positions 118, 119, 120, 247, 248, 249, 250, 256, 258, 259, and 260 each coordinate tetradecanoyl-CoA.

Belongs to the NMT family.

The protein resides in the cytoplasm. It is found in the cytosol. It localises to the membrane. It catalyses the reaction N-terminal glycyl-[protein] + tetradecanoyl-CoA = N-tetradecanoylglycyl-[protein] + CoA + H(+). The enzyme catalyses N-terminal glycyl-L-lysyl-[protein] + tetradecanoyl-CoA = N-terminal glycyl-(N(6)-tetradecanoyl)-L-lysyl-[protein] + CoA + H(+). Its function is as follows. Adds a myristoyl group to the N-terminal glycine residue of certain cellular and viral proteins. Also able to mediate N-terminal lysine myristoylation of proteins: catalyzes myristoylation of ARF6 on both 'Gly-2' and 'Lys-3'. Lysine myristoylation is required to maintain ARF6 on membranes during the GTPase cycle. In Rattus norvegicus (Rat), this protein is Glycylpeptide N-tetradecanoyltransferase 1 (Nmt1).